The sequence spans 586 residues: CTP synthase 2 (586 aa).

Residues 300-554 (SIALVGKYTK…LAATGTLNTH (255 aa)) enclose the Glutamine amidotransferase type-1 domain. Catalysis depends on for GATase activity residues C399, H526, and E528. Phosphoserine is present on residues S568, S571, and S574.

This sequence belongs to the CTP synthase family.

The catalysed reaction is UTP + L-glutamine + ATP + H2O = CTP + L-glutamate + ADP + phosphate + 2 H(+). The protein operates within pyrimidine metabolism; CTP biosynthesis via de novo pathway; CTP from UDP: step 2/2. Functionally, catalyzes the ATP-dependent amination of UTP to CTP with either L-glutamine or ammonia as the source of nitrogen. Constitutes the rate-limiting enzyme in the synthesis of cytosine nucleotides. The polypeptide is CTP synthase 2 (Ctps2) (Rattus norvegicus (Rat)).